The primary structure comprises 646 residues: Protein kinase YegI (646 aa).

In terms of domain architecture, Protein kinase spans 13-300; the sequence is VTPGRELGKG…KAWVAALDLL (288 aa). Residues 19-27 and K39 each bind ATP; that span reads LGKGGEGAV. Residue D141 is the Proton acceptor of the active site.

Autophosphorylated.

Functionally, probable serine/threonine kinase. The sequence is that of Protein kinase YegI (yegI) from Escherichia coli O157:H7.